The chain runs to 307 residues: Metapyrocatechase (307 aa).

VOC domains lie at R7 to D122 and R150 to G269. Fe cation-binding residues include H153, H214, and E265.

Belongs to the extradiol ring-cleavage dioxygenase family. Homotetramer. Fe(2+) is required as a cofactor.

It carries out the reaction catechol + O2 = (2Z,4E)-2-hydroxy-6-oxohexa-2,4-dienoate + H(+). Its pathway is aromatic compound metabolism; benzoate degradation via hydroxylation. In Pseudomonas sp. (strain CF600), this protein is Metapyrocatechase (dmpB).